We begin with the raw amino-acid sequence, 369 residues long: Anhydro-N-acetylmuramic acid kinase (369 aa).

12-19 is an ATP binding site; the sequence is GTSLDGVD.

This sequence belongs to the anhydro-N-acetylmuramic acid kinase family.

It catalyses the reaction 1,6-anhydro-N-acetyl-beta-muramate + ATP + H2O = N-acetyl-D-muramate 6-phosphate + ADP + H(+). It functions in the pathway amino-sugar metabolism; 1,6-anhydro-N-acetylmuramate degradation. The protein operates within cell wall biogenesis; peptidoglycan recycling. Its function is as follows. Catalyzes the specific phosphorylation of 1,6-anhydro-N-acetylmuramic acid (anhMurNAc) with the simultaneous cleavage of the 1,6-anhydro ring, generating MurNAc-6-P. Is required for the utilization of anhMurNAc either imported from the medium or derived from its own cell wall murein, and thus plays a role in cell wall recycling. The polypeptide is Anhydro-N-acetylmuramic acid kinase (Escherichia coli O139:H28 (strain E24377A / ETEC)).